Here is a 345-residue protein sequence, read N- to C-terminus: MKKVAMLGAGSWGTALSLVLADNGHQVMMWGHRAELIDQINELHENKDYLPGVELSSSIIGTADLSEALKGADFIIVAVPTKAIREVLKKALPYIPKQSIFVHVSKGIEPDSLLRISELMEEELPEEYRKDIVVLSGPSHAEEVGLRHPTTVTSSSKNIKAAEAVQDLFMNQHFRVYTNPDMIGVEIGGALKNIIALAAGITDGLGYGDNAKAALITRGLAEIARLGTKMGGNPLTFSGLTGVGDLIVTCTSVHSRNWRAGNLLGKGYKLEAVLDKMGMVVEGVRTTKAAYQLSQKYQVKMPITEALHQVLFNGQKVETAVESLMARVKTHEMEDLVNTFENRVK.

5 residues coordinate NADPH: S11, W12, H32, R33, and K106. Sn-glycerol 3-phosphate-binding residues include K106, G137, and S139. A141 serves as a coordination point for NADPH. Sn-glycerol 3-phosphate-binding residues include K192, D245, S255, R256, and N257. K192 functions as the Proton acceptor in the catalytic mechanism. R256 provides a ligand contact to NADPH. V280 and E282 together coordinate NADPH.

Belongs to the NAD-dependent glycerol-3-phosphate dehydrogenase family.

It localises to the cytoplasm. It catalyses the reaction sn-glycerol 3-phosphate + NAD(+) = dihydroxyacetone phosphate + NADH + H(+). It carries out the reaction sn-glycerol 3-phosphate + NADP(+) = dihydroxyacetone phosphate + NADPH + H(+). It participates in membrane lipid metabolism; glycerophospholipid metabolism. In terms of biological role, catalyzes the reduction of the glycolytic intermediate dihydroxyacetone phosphate (DHAP) to sn-glycerol 3-phosphate (G3P), the key precursor for phospholipid synthesis. In Bacillus velezensis (strain DSM 23117 / BGSC 10A6 / LMG 26770 / FZB42) (Bacillus amyloliquefaciens subsp. plantarum), this protein is Glycerol-3-phosphate dehydrogenase [NAD(P)+].